The chain runs to 229 residues: Triosephosphate isomerase (229 aa).

6-8 provides a ligand contact to substrate; the sequence is NFK. Residue histidine 88 is the Electrophile of the active site. The active-site Proton acceptor is glutamate 157. Positions 163 and 193 each coordinate substrate.

It belongs to the triosephosphate isomerase family. Homodimer.

It is found in the cytoplasm. The catalysed reaction is D-glyceraldehyde 3-phosphate = dihydroxyacetone phosphate. It participates in carbohydrate biosynthesis; gluconeogenesis. The protein operates within carbohydrate degradation; glycolysis; D-glyceraldehyde 3-phosphate from glycerone phosphate: step 1/1. Functionally, involved in the gluconeogenesis. Catalyzes stereospecifically the conversion of dihydroxyacetone phosphate (DHAP) to D-glyceraldehyde-3-phosphate (G3P). The chain is Triosephosphate isomerase from Sulfurovum sp. (strain NBC37-1).